Reading from the N-terminus, the 292-residue chain is Histamine N-methyltransferase (292 aa).

Residue Glu-28 coordinates substrate. The S-adenosyl-L-methionine site is built by Gly-60, Glu-89, and Ile-142. Asn-283 lines the substrate pocket.

The protein belongs to the class I-like SAM-binding methyltransferase superfamily. HNMT family. As to quaternary structure, monomer.

The protein resides in the cytoplasm. The enzyme catalyses histamine + S-adenosyl-L-methionine = N(tau)-methylhistamine + S-adenosyl-L-homocysteine + H(+). Functionally, inactivates histamine by N-methylation. Plays an important role in degrading histamine and in regulating the airway response to histamine. This chain is Histamine N-methyltransferase (hnmt), found in Danio rerio (Zebrafish).